Consider the following 570-residue polypeptide: CRISPR-associated protein Cas8a1/Csx13 (570 aa).

Disordered regions lie at residues 1–23 (MACM…AGLR) and 551–570 (GGEA…SEQS).

This sequence belongs to the CRISPR-associated protein Cas8a1/Csx13 family. Myxan subtype subfamily.

In terms of biological role, CRISPR (clustered regularly interspaced short palindromic repeat) is an adaptive immune system that provides protection against mobile genetic elements (viruses, transposable elements and conjugative plasmids). CRISPR clusters contain spacers, sequences complementary to antecedent mobile elements, and target invading nucleic acids. CRISPR clusters are transcribed and processed into CRISPR RNA (crRNA). Functionally, functions in an unknown fashion to stimulate transcription of fruA independently of the intracellular A- and E-developmental signals. This is CRISPR-associated protein Cas8a1/Csx13 (devT) from Myxococcus xanthus (strain DK1622).